A 157-amino-acid polypeptide reads, in one-letter code: Arginine repressor (157 aa).

It belongs to the ArgR family.

It is found in the cytoplasm. It participates in amino-acid biosynthesis; L-arginine biosynthesis [regulation]. In terms of biological role, regulates arginine biosynthesis genes. The polypeptide is Arginine repressor (Lactobacillus delbrueckii subsp. bulgaricus (strain ATCC 11842 / DSM 20081 / BCRC 10696 / JCM 1002 / NBRC 13953 / NCIMB 11778 / NCTC 12712 / WDCM 00102 / Lb 14)).